We begin with the raw amino-acid sequence, 212 residues long: Ras-related protein RABC1 (212 aa).

Glycine 2 bears the N-acetylglycine mark. Position 20-27 (glycine 20–serine 27) interacts with GTP. Residues leucine 41–phenylalanine 49 carry the Effector region motif. Residues aspartate 67 to glutamine 71, asparagine 127 to aspartate 130, and serine 157 to alanine 158 contribute to the GTP site. The segment at threonine 182–serine 212 is disordered. Residues threonine 201–serine 212 are compositionally biased toward low complexity. Residues cysteine 209 and cysteine 210 are each lipidated (S-geranylgeranyl cysteine).

This sequence belongs to the small GTPase superfamily. Rab family.

It localises to the cell membrane. Intracellular vesicle trafficking and protein transport. This is Ras-related protein RABC1 (RABC1) from Arabidopsis thaliana (Mouse-ear cress).